The chain runs to 432 residues: Glutamyl-tRNA reductase (432 aa).

Substrate is bound by residues 55 to 58, Ser114, 119 to 121, and Gln125; these read TCNR and ETQ. Cys56 (nucleophile) is an active-site residue. An NADP(+)-binding site is contributed by 194 to 199; that stretch reads GAGEMI.

This sequence belongs to the glutamyl-tRNA reductase family. Homodimer.

The enzyme catalyses (S)-4-amino-5-oxopentanoate + tRNA(Glu) + NADP(+) = L-glutamyl-tRNA(Glu) + NADPH + H(+). The protein operates within porphyrin-containing compound metabolism; protoporphyrin-IX biosynthesis; 5-aminolevulinate from L-glutamyl-tRNA(Glu): step 1/2. Functionally, catalyzes the NADPH-dependent reduction of glutamyl-tRNA(Glu) to glutamate 1-semialdehyde (GSA). This chain is Glutamyl-tRNA reductase, found in Burkholderia thailandensis (strain ATCC 700388 / DSM 13276 / CCUG 48851 / CIP 106301 / E264).